Consider the following 95-residue polypeptide: Complement inhibitor RaCI5 (95 aa).

The N-terminal stretch at 1–21 (MNAVIVLCVTISAVLIHQCYS) is a signal peptide. 3 disulfides stabilise this stretch: Cys35–Cys59, Cys40–Cys61, and Cys55–Cys76.

The protein belongs to the RaCI family. In terms of tissue distribution, expressed in salivary glands.

The protein localises to the secreted. In terms of biological role, complement inhibitor. Prevents complement-mediated C5 activation by binding to C5. Binds C5 at a different binding site than the other tick complement inhibitors OmCI and CirpT1, and the drug eculizumab. This chain is Complement inhibitor RaCI5, found in Rhipicephalus appendiculatus (Brown ear tick).